Here is a 186-residue protein sequence, read N- to C-terminus: MISSNDFRTGTTIELDGQVWRVVEFLHVKPGKGSAFVRTKLKSAQSGNVVEKTFRAGEMVASALLEKSTLQHTYMEGEDFVFMDMASYEETRLTAKQIGEGRKYLKEGMEVNVVSWKDNPIEVELPNSVVLEVTETDPGVKGDTATGGTKPAIVETGAQVMVPLFISIGEKIKIDTRSDSYLGRES.

The protein belongs to the elongation factor P family.

It localises to the cytoplasm. Its pathway is protein biosynthesis; polypeptide chain elongation. Its function is as follows. Involved in peptide bond synthesis. Stimulates efficient translation and peptide-bond synthesis on native or reconstituted 70S ribosomes in vitro. Probably functions indirectly by altering the affinity of the ribosome for aminoacyl-tRNA, thus increasing their reactivity as acceptors for peptidyl transferase. The polypeptide is Elongation factor P (Synechococcus sp. (strain RCC307)).